A 716-amino-acid chain; its full sequence is Beta-galactosidase (716 aa).

The active-site Proton donor is the Glu-389. The Nucleophile role is filled by Glu-462.

The protein belongs to the glycosyl hydrolase 2 family. As to quaternary structure, homodimer.

It catalyses the reaction Hydrolysis of terminal non-reducing beta-D-galactose residues in beta-D-galactosides.. Displays beta-galactosidase activity with the artificial chromogenic substrate o-nitrophenyl-beta-D-galactopyranoside (ONPG). This is Beta-galactosidase from Thermoanaerobacterium thermosulfurigenes (Clostridium thermosulfurogenes).